The chain runs to 232 residues: GFP-like fluorescent chromoprotein dsFP483 (232 aa).

Positions 66–68 form a cross-link, 2-iminomethyl-5-imidazolinone (Gln-Gly); sequence QYG. A 2,3-didehydrotyrosine modification is found at Tyr-67.

This sequence belongs to the GFP family. Contains a chromophore consisting of modified amino acid residues. The chromophore is formed by autocatalytic backbone condensation between Xaa-N and Gly-(N+2), oxidation of Tyr-(N+1) to didehydrotyrosine, and formation of a double bond to the alpha-amino nitrogen of residue Xaa-N. Maturation of the chromophore requires nothing other than molecular oxygen. The precise stereochemistry of the tyrosine has not been determined. As to expression, oral disk.

Functionally, pigment protein that is green in color. This chain is GFP-like fluorescent chromoprotein dsFP483, found in Discosoma striata (Striped mushroom).